The chain runs to 266 residues: Glucosamine-6-phosphate deaminase (266 aa).

D72 (proton acceptor; for enolization step) is an active-site residue. Catalysis depends on D141, which acts as the For ring-opening step. The Proton acceptor; for ring-opening step role is filled by H143. The For ring-opening step role is filled by E148.

It belongs to the glucosamine/galactosamine-6-phosphate isomerase family. NagB subfamily. In terms of assembly, homohexamer.

The enzyme catalyses alpha-D-glucosamine 6-phosphate + H2O = beta-D-fructose 6-phosphate + NH4(+). It functions in the pathway amino-sugar metabolism; N-acetylneuraminate degradation; D-fructose 6-phosphate from N-acetylneuraminate: step 5/5. With respect to regulation, allosterically activated by N-acetylglucosamine 6-phosphate (GlcNAc6P). Its function is as follows. Catalyzes the reversible isomerization-deamination of glucosamine 6-phosphate (GlcN6P) to form fructose 6-phosphate (Fru6P) and ammonium ion. The chain is Glucosamine-6-phosphate deaminase from Edwardsiella ictaluri (strain 93-146).